Consider the following 350-residue polypeptide: tRNA pseudouridine synthase D (350 aa).

Residue Asp-85 is the Nucleophile of the active site. Positions 160–310 (GVINYFGEQR…EAARRTILLR (151 aa)) constitute a TRUD domain.

It belongs to the pseudouridine synthase TruD family.

The catalysed reaction is uridine(13) in tRNA = pseudouridine(13) in tRNA. Responsible for synthesis of pseudouridine from uracil-13 in transfer RNAs. The sequence is that of tRNA pseudouridine synthase D from Idiomarina loihiensis (strain ATCC BAA-735 / DSM 15497 / L2-TR).